A 426-amino-acid chain; its full sequence is MNHSETLFEQAQKYIPGGVNSPVRAFRGVGGTPVFFKHAEGAYLYDEDDRRYIDFIGSWGPMILGHSDPRIKAALHAQVDLGVGYGAPTAIETEMAKKVCELVPSIELVRMVNSGTEATMSAIRLARGYTGRDKIVKFEGCYHGHVDSLLVKAGSGALTLGVPNSPGIPASLAEHTLTLTYNDIDEVRETFRQMGDQIAAIIVEPVAGNMNCIPPVPGFLEALREVCDEHGTVLIFDEVMTGFRVSLGGAQGFYGVKPDLTALGKVIGGGLPVGAFGGKREIMEHISPLGPVYQAGTLSGNPLAMTAGLTTLNAISEPGFHDRLTEKTNRVKDGFKAAADEAGIPLAVQSAGAMFGFFFTAEPSITRFDQVMACDVERFKAFFQGMLKEGVYLAPSAFEAGFTTAALSDEDIEFTLAAARKVMKTL.

Lys-265 bears the N6-(pyridoxal phosphate)lysine mark.

The protein belongs to the class-III pyridoxal-phosphate-dependent aminotransferase family. HemL subfamily. As to quaternary structure, homodimer. It depends on pyridoxal 5'-phosphate as a cofactor.

Its subcellular location is the cytoplasm. The enzyme catalyses (S)-4-amino-5-oxopentanoate = 5-aminolevulinate. It functions in the pathway porphyrin-containing compound metabolism; protoporphyrin-IX biosynthesis; 5-aminolevulinate from L-glutamyl-tRNA(Glu): step 2/2. In Marinobacter nauticus (strain ATCC 700491 / DSM 11845 / VT8) (Marinobacter aquaeolei), this protein is Glutamate-1-semialdehyde 2,1-aminomutase.